Reading from the N-terminus, the 61-residue chain is Cytotoxin homolog 2 (61 aa).

4 disulfides stabilise this stretch: cysteine 3–cysteine 22, cysteine 15–cysteine 39, cysteine 43–cysteine 54, and cysteine 55–cysteine 60.

This sequence belongs to the three-finger toxin family. Short-chain subfamily. Orphan group XV sub-subfamily. As to expression, expressed by the venom gland.

The protein resides in the secreted. It localises to the target cell membrane. Has low cytotoxic activity. The polypeptide is Cytotoxin homolog 2 (Naja melanoleuca (Forest cobra)).